The primary structure comprises 131 residues: Cuticle protein 79, isoform A (131 aa).

A run of 3 repeats spans residues 37-40 (AAPA), 45-48 (AAPA), and 53-56 (AAPA).

Component of the cuticle of migratory locust which contains more than 100 different structural proteins. This is Cuticle protein 79, isoform A from Locusta migratoria (Migratory locust).